The following is a 359-amino-acid chain: Probable dual-specificity RNA methyltransferase RlmN (359 aa).

Catalysis depends on Glu-91, which acts as the Proton acceptor. Residues 97–329 (QHYGHSVCVT…KKNGVNCVVR (233 aa)) enclose the Radical SAM core domain. The cysteines at positions 104 and 340 are disulfide-linked. Cys-111, Cys-115, and Cys-118 together coordinate [4Fe-4S] cluster. S-adenosyl-L-methionine-binding positions include 163–164 (GE), Ser-195, 218–220 (SLH), and Asn-296. Cys-340 (S-methylcysteine intermediate) is an active-site residue.

This sequence belongs to the radical SAM superfamily. RlmN family. The cofactor is [4Fe-4S] cluster.

Its subcellular location is the cytoplasm. The enzyme catalyses adenosine(2503) in 23S rRNA + 2 reduced [2Fe-2S]-[ferredoxin] + 2 S-adenosyl-L-methionine = 2-methyladenosine(2503) in 23S rRNA + 5'-deoxyadenosine + L-methionine + 2 oxidized [2Fe-2S]-[ferredoxin] + S-adenosyl-L-homocysteine. It catalyses the reaction adenosine(37) in tRNA + 2 reduced [2Fe-2S]-[ferredoxin] + 2 S-adenosyl-L-methionine = 2-methyladenosine(37) in tRNA + 5'-deoxyadenosine + L-methionine + 2 oxidized [2Fe-2S]-[ferredoxin] + S-adenosyl-L-homocysteine. Functionally, specifically methylates position 2 of adenine 2503 in 23S rRNA and position 2 of adenine 37 in tRNAs. The polypeptide is Probable dual-specificity RNA methyltransferase RlmN (Streptococcus pyogenes serotype M5 (strain Manfredo)).